The primary structure comprises 181 residues: uncharacterized protein (181 aa).

This is an uncharacterized protein from Sinorhizobium fredii (strain NBRC 101917 / NGR234).